Reading from the N-terminus, the 128-residue chain is Kinetoplast-associated protein 4 (128 aa).

A propeptide spanning residues 1-10 is cleaved from the precursor; that stretch reads MLRFVPRRLA. Residues 60 to 87 form a disordered region; the sequence is AHPGFKRKEKEPKELKAAKAAKTSTPRA. Over residues 65 to 76 the composition is skewed to basic and acidic residues; the sequence is KRKEKEPKELKA.

It belongs to the KAP family. Associates with the kinetoplast DNA network.

It localises to the mitochondrion matrix. The protein localises to the kinetoplast. In terms of biological role, histone H1-like DNA-binding protein involved in the organization and segregation of kinetoplast DNA (kDNA). The mitochondrial DNA of kinetoplastid protozoa consists of about 5,000 minicircles and 20 to 30 maxicircles. These circular DNAs are held together by catenation into a highly organized compact disk structure referred to as a kinetoplast DNA (kDNA) network. Binds preferentially to a specific fragment of minicircle DNA and is able to compact kDNA networks through DNA charge neutralization and condensation. The sequence is that of Kinetoplast-associated protein 4 (KAP4) from Crithidia fasciculata.